The sequence spans 431 residues: MHICIPVTEELQDTLGCRFVLYSVYLEGFLLFKVRYKDLHLWNEQIHRVFGNGLPKFPPKHYLAMTKNMANERRLQLEQYLQQIVTDPVVTSSDIFMDYFRKLQMDTFNMPTVKLILRVYVPDGAAVELDVRTSDSAERVLEAALFRLGVSRELAEYFSLFITHKEAKGPFTVVKRIAAFELPFLTIWNLEDDQFQIEVRKWYMNPSNDVMLMGSTEAIDILYLQAVQEFQMDWTRPTKDQEQKLQHCLKEENKLKFLELMKTVEYYGYLQIASCASDYPECDSEVNVWVGNNEMSCHFHSPGGHTEHLRLNIRDLICWNVSLLQPKKQEVMSPNHQHLEFKFEYQQGSSLKCITIRTEQAFLLSSCLKKMLSEYPVHRSKEELEIQVDRAQATHKFNIRPVQNGVHTKKQTLLKDKAEYCLIDDISDLNL.

A PX domain is found at 1–107; it reads MHICIPVTEE…DYFRKLQMDT (107 aa).

Belongs to the sorting nexin family.

Functionally, may be involved in protein trafficking. This Xenopus laevis (African clawed frog) protein is Sorting nexin-31 (snx31).